The primary structure comprises 246 residues: 4'-phosphopantetheinyl transferase Svp (246 aa).

Residues 223–232 (AGTAEESAEG) are compositionally biased toward low complexity. The tract at residues 223 to 246 (AGTAEESAEGAGKEATADDRTAVP) is disordered. Residues 233-246 (AGKEATADDRTAVP) are compositionally biased toward basic and acidic residues.

Belongs to the P-Pant transferase superfamily. Gsp/Sfp/HetI/AcpT family.

It carries out the reaction apo-[ACP] + CoA = holo-[ACP] + adenosine 3',5'-bisphosphate + H(+). Its function is as follows. Transfers the 4'-phosphopantetheine moiety from coenzyme A to a Ser of an acyl-carrier-protein. The enzyme is able to transfer the cofactor to a broad range of enzymes with acyl- or peptidyl-carrier protein domains. This is 4'-phosphopantetheinyl transferase Svp (svp) from Streptomyces mobaraensis (Streptoverticillium mobaraense).